A 61-amino-acid polypeptide reads, in one-letter code: Photosystem II reaction center X protein (61 aa).

The helical transmembrane segment at 26 to 46 (IGSFIAAALLIVVPATAFLIF) threads the bilayer.

Belongs to the PsbX family. Type 2 subfamily. PSII consists of a core antenna complex that captures photons, and an electron transfer chain that converts photonic excitation into a charge separation. PSII forms dimeric complexes.

The protein localises to the cellular thylakoid membrane. Its function is as follows. Involved in the binding and/or turnover of quinones at the Q(B) site of Photosystem II. In Prochlorococcus marinus (strain AS9601), this protein is Photosystem II reaction center X protein.